Here is a 185-residue protein sequence, read N- to C-terminus: MEKHLVMYLTRKSIMLLRKYPLVTEFQVSKCGSHIVKIRRDVLYPKRTKYSKYSKCRCSRGCEPDGTQLGFGRYGTKSCRAGRLSYRAIEAARRATIGQFHRAMSGQFRRNCKIWVRVLADLPITGKPAEVRMGRGKGNPTGWIARVSTGQIPFEMDGVSLSNARQAARLAAHKPCSSTKFVQWS.

It belongs to the universal ribosomal protein uL16 family.

Its subcellular location is the mitochondrion. The polypeptide is Large ribosomal subunit protein uL16m (RPL16) (Oryza sativa subsp. japonica (Rice)).